A 261-amino-acid polypeptide reads, in one-letter code: Phosphatidylglycerol--prolipoprotein diacylglyceryl transferase (261 aa).

3 consecutive transmembrane segments (helical) span residues 20–40 (LAIH…VWLA), 54–74 (IIDF…LYYV), and 88–108 (IIAI…GAIV). Arg-139 contributes to the a 1,2-diacyl-sn-glycero-3-phospho-(1'-sn-glycerol) binding site. The next 2 helical transmembrane spans lie at 175–195 (MPTF…VMVF) and 235–255 (ARVS…LFVY).

Belongs to the Lgt family.

The protein localises to the cell membrane. The enzyme catalyses L-cysteinyl-[prolipoprotein] + a 1,2-diacyl-sn-glycero-3-phospho-(1'-sn-glycerol) = an S-1,2-diacyl-sn-glyceryl-L-cysteinyl-[prolipoprotein] + sn-glycerol 1-phosphate + H(+). Its pathway is protein modification; lipoprotein biosynthesis (diacylglyceryl transfer). Functionally, catalyzes the transfer of the diacylglyceryl group from phosphatidylglycerol to the sulfhydryl group of the N-terminal cysteine of a prolipoprotein, the first step in the formation of mature lipoproteins. This Lactococcus lactis subsp. cremoris (strain MG1363) protein is Phosphatidylglycerol--prolipoprotein diacylglyceryl transferase.